The primary structure comprises 63 residues: Large ribosomal subunit protein bL28 (63 aa).

The segment at 1–20 is disordered; it reads MSKRCAITGKGPMVGNNVSH.

The protein belongs to the bacterial ribosomal protein bL28 family.

The polypeptide is Large ribosomal subunit protein bL28 (Campylobacter fetus subsp. fetus (strain 82-40)).